Here is a 532-residue protein sequence, read N- to C-terminus: Di/tripeptide-binding protein 2 (532 aa).

An N-terminal signal peptide occupies residues 1 to 24 (MRPRSALRYSLLLLAFAASAAIQA).

Belongs to the bacterial solute-binding protein 5 family. In terms of assembly, the complex is composed of two ATP-binding proteins (DppD and DppF), two transmembrane proteins (DppB and DppC) and a solute-binding protein (DppA2). Five orthologous SBPs (DppA1-A5) are present in P.aeruginosa, which increases the substrate specificity of the DppBCDF transporter.

Its function is as follows. Part of the ABC transporter DppABCDF involved in the uptake of various di/tripeptides. Shows high flexibility on substrate recognition. Efficiently uses tripeptides. The chain is Di/tripeptide-binding protein 2 from Pseudomonas aeruginosa (strain UCBPP-PA14).